The primary structure comprises 157 residues: MILTIDFTDETNEVAAQHTELVEKLLQHAASVESIEPETEVSVTFVTNDTIQDINREYRGKDQPTDVISFALEELGEGEMAVTFEGMPRVLGDIIISTDRAKEQAEEYNHSFERELGFLAVHGFLHLLGYDHMEPEEEKVMFTKQDEILQTFGLGRD.

His122, His126, and His132 together coordinate Zn(2+).

Belongs to the endoribonuclease YbeY family. Zn(2+) serves as cofactor.

The protein resides in the cytoplasm. Functionally, single strand-specific metallo-endoribonuclease involved in late-stage 70S ribosome quality control and in maturation of the 3' terminus of the 16S rRNA. This Lysinibacillus sphaericus (strain C3-41) protein is Endoribonuclease YbeY.